The sequence spans 92 residues: Small ribosomal subunit protein uS19 (92 aa).

The protein belongs to the universal ribosomal protein uS19 family.

Protein S19 forms a complex with S13 that binds strongly to the 16S ribosomal RNA. The protein is Small ribosomal subunit protein uS19 of Thermobifida fusca (strain YX).